The sequence spans 359 residues: Small ribosomal subunit protein uS2 (359 aa).

Positions 232 to 295 are disordered; the sequence is EPQFKPSEFT…PVGTEPVATT (64 aa). Basic and acidic residues-rich tracts occupy residues 239–250 and 257–273; these read EFTRRDGDENRN and DNRR…DTHY.

It belongs to the universal ribosomal protein uS2 family.

This chain is Small ribosomal subunit protein uS2 (rpsB), found in Spiroplasma citri.